The chain runs to 244 residues: Carboxy-S-adenosyl-L-methionine synthase (244 aa).

Residues Tyr-40, Gly-65–Ser-67, Asp-90–Asn-91, Asn-134, and Arg-201 each bind S-adenosyl-L-methionine.

The protein belongs to the class I-like SAM-binding methyltransferase superfamily. Cx-SAM synthase family. As to quaternary structure, homodimer.

The catalysed reaction is prephenate + S-adenosyl-L-methionine = carboxy-S-adenosyl-L-methionine + 3-phenylpyruvate + H2O. Functionally, catalyzes the conversion of S-adenosyl-L-methionine (SAM) to carboxy-S-adenosyl-L-methionine (Cx-SAM). This is Carboxy-S-adenosyl-L-methionine synthase from Citrifermentans bemidjiense (strain ATCC BAA-1014 / DSM 16622 / JCM 12645 / Bem) (Geobacter bemidjiensis).